The primary structure comprises 497 residues: Cysteine desulfurase, mitochondrial (497 aa).

The N-terminal 33 residues, 1–33 (MLKSTATRSITRLSQVYNVPAATYRACLVSRRF), are a transit peptide targeting the mitochondrion. Residues 168-169 (AT), Asn-248, Gln-276, and 296-298 (SSH) each bind pyridoxal 5'-phosphate. At Lys-299 the chain carries N6-(pyridoxal phosphate)lysine. Residue Thr-336 coordinates pyridoxal 5'-phosphate. Residue Cys-421 is the Cysteine persulfide intermediate of the active site. Cys-421 lines the [2Fe-2S] cluster pocket.

The protein belongs to the class-V pyridoxal-phosphate-dependent aminotransferase family. NifS/IscS subfamily. Pyridoxal 5'-phosphate is required as a cofactor.

It localises to the mitochondrion. The enzyme catalyses (sulfur carrier)-H + L-cysteine = (sulfur carrier)-SH + L-alanine. Its function is as follows. Catalyzes the removal of elemental sulfur from cysteine to produce alanine. It supplies the inorganic sulfur for iron-sulfur (Fe-S) clusters. Plays a role in both tRNA-processing and mitochondrial metabolism. Involved in the 2-thio-modification of both 5-carboxymethylaminomethyl-2-thiouridine in mitochondrial tRNAs and 5-methoxycarbonylmethyl-2-thiouridine (mcm5s2U) in cytoplasmic tRNAs. This is Cysteine desulfurase, mitochondrial from Saccharomyces cerevisiae (strain ATCC 204508 / S288c) (Baker's yeast).